A 62-amino-acid chain; its full sequence is Negative regulatory protein YxlE (62 aa).

2 helical membrane-spanning segments follow: residues M7–I27 and W37–V57.

It is found in the cell membrane. Its function is as follows. Together with YxlD is important for negative regulation of sigma Y activity. This chain is Negative regulatory protein YxlE (yxlE), found in Bacillus subtilis (strain 168).